Reading from the N-terminus, the 130-residue chain is Putative ankyrin repeat protein R886 (130 aa).

3 ANK repeats span residues asparagine 21 to alanine 50, tyrosine 54 to lysine 83, and aspartate 85 to tyrosine 113.

This Acanthamoeba polyphaga (Amoeba) protein is Putative ankyrin repeat protein R886.